Here is a 380-residue protein sequence, read N- to C-terminus: MSKRDFYEVLGVSRDASERDIKKAYKRLAMKFHPDRNQGDETAPEKFKEVKVAYEILTDAQKRAAYDQYGHAAFEQGGMGGGGGFGGGQGDFGDIFGDVFGDIFGGGRRGGQQRAQRGSDLRYNMELTLEEAVRGCEKDIEIPTLAACEPCDGTGAKKGTSSTTCSTCHGQGQVQMRQGFFAVQQACPTCHGKGKIIKDPCNSCHGDGRVQKTKTLNVKIPSGVDTGDRIRLSGEGEAGEHGAPAGDLYVQVHVKEHNIFDRDGNNLYCEVPVSFTMAALGGEVEVPTLDGRVSLKVPLETQTGRMFRMRGKGVKGVRTHSAGDLIVKLIVETPVKLTKRQRELLKEFQESFDGKDAKKHNPKSEGFLSGVKNFFDDLTK.

The 66-residue stretch at 5 to 70 (DFYEVLGVSR…QKRAAYDQYG (66 aa)) folds into the J domain. The CR-type zinc-finger motif lies at 135-213 (GCEKDIEIPT…CHGDGRVQKT (79 aa)). The Zn(2+) site is built by cysteine 148, cysteine 151, cysteine 165, cysteine 168, cysteine 187, cysteine 190, cysteine 201, and cysteine 204. CXXCXGXG motif repeat units lie at residues 148–155 (CEPCDGTG), 165–172 (CSTCHGQG), 187–194 (CPTCHGKG), and 201–208 (CNSCHGDG).

It belongs to the DnaJ family. As to quaternary structure, homodimer. It depends on Zn(2+) as a cofactor.

The protein localises to the cytoplasm. In terms of biological role, participates actively in the response to hyperosmotic and heat shock by preventing the aggregation of stress-denatured proteins and by disaggregating proteins, also in an autonomous, DnaK-independent fashion. Unfolded proteins bind initially to DnaJ; upon interaction with the DnaJ-bound protein, DnaK hydrolyzes its bound ATP, resulting in the formation of a stable complex. GrpE releases ADP from DnaK; ATP binding to DnaK triggers the release of the substrate protein, thus completing the reaction cycle. Several rounds of ATP-dependent interactions between DnaJ, DnaK and GrpE are required for fully efficient folding. Also involved, together with DnaK and GrpE, in the DNA replication of plasmids through activation of initiation proteins. This is Chaperone protein DnaJ from Aliivibrio salmonicida (strain LFI1238) (Vibrio salmonicida (strain LFI1238)).